A 590-amino-acid chain; its full sequence is Melanophilin (590 aa).

Residues 4–124 form the RabBD domain; it reads RLDLSTLTDE…IGSLEWYYQH (121 aa). The segment at 64 to 107 adopts an FYVE-type zinc-finger fold; that stretch reads CARCLQPYRLLLNSRRQCLECSLFVCKSCSHAHPEEQGWLCDPC. 5 disordered regions span residues 147–182, 215–276, 311–335, 361–472, and 485–590; these read GGGGSEPSLEEGNGDSEQTDEDGDLDTEARDQPLNS, SVPE…AELD, DTSDEDSIQGPRAASQHSKRRARTV, VLPP…SEIS, and GLTV…AQQP. Acidic residues predominate over residues 154–172; the sequence is SLEEGNGDSEQTDEDGDLD. Residues 215-238 show a composition bias toward polar residues; that stretch reads SVPESAHSLQSLSGEPYSEDTTSL. A coiled-coil region spans residues 339–485; it reads QILELNKRMS…SRIAALRAAG (147 aa). The segment covering 391-401 has biased composition (low complexity); it reads LTSNISGSSTS. A compositionally biased stretch (basic and acidic residues) spans 424-433; sequence GHMETQERNP.

Binds RAB27A that has been activated by GTP-binding via its N-terminus. Binds MYO5A via its C-terminal coiled coil domain. In terms of tissue distribution, highly expressed in embryos at day 7; not detectable at day 11. Highly expressed in adult stomach; detected at lower levels in kidney, lung, skin and small intestine. Detected in melanocytes.

The protein resides in the melanosome. Rab effector protein involved in melanosome transport. Serves as link between melanosome-bound RAB27A and the motor protein MYO5A. The protein is Melanophilin (Mlph) of Mus musculus (Mouse).